A 411-amino-acid chain; its full sequence is 2,3-bisphosphoglycerate-independent phosphoglycerate mutase 1 (411 aa).

It belongs to the BPG-independent phosphoglycerate mutase family. A-PGAM subfamily. As to quaternary structure, homotetramer. Requires Mg(2+) as cofactor.

It carries out the reaction (2R)-2-phosphoglycerate = (2R)-3-phosphoglycerate. Its pathway is carbohydrate degradation; glycolysis; pyruvate from D-glyceraldehyde 3-phosphate: step 3/5. Inhibited to approximately 20% by EDTA. Its function is as follows. Catalyzes the interconversion of 2-phosphoglycerate and 3-phosphoglycerate. The sequence is that of 2,3-bisphosphoglycerate-independent phosphoglycerate mutase 1 (apgM1) from Methanocaldococcus jannaschii (strain ATCC 43067 / DSM 2661 / JAL-1 / JCM 10045 / NBRC 100440) (Methanococcus jannaschii).